The chain runs to 270 residues: Energy-coupling factor transporter ATP-binding protein EcfA (270 aa).

An ABC transporter domain is found at 5–238 (VEIENLTFFY…QLLEQNGLKA (234 aa)). 38 to 45 (GHNGAGKS) contacts ATP.

The protein belongs to the ABC transporter superfamily. Energy-coupling factor EcfA family. In terms of assembly, forms a stable energy-coupling factor (ECF) transporter complex composed of 2 membrane-embedded substrate-binding proteins (S component), 2 ATP-binding proteins (A component) and 2 transmembrane proteins (T component).

Its subcellular location is the cell membrane. In terms of biological role, ATP-binding (A) component of a common energy-coupling factor (ECF) ABC-transporter complex. Unlike classic ABC transporters this ECF transporter provides the energy necessary to transport a number of different substrates. The polypeptide is Energy-coupling factor transporter ATP-binding protein EcfA (Carboxydothermus hydrogenoformans (strain ATCC BAA-161 / DSM 6008 / Z-2901)).